Here is a 118-residue protein sequence, read N- to C-terminus: Protein 5.3 (118 aa).

This Escherichia phage T7 (Bacteriophage T7) protein is Protein 5.3.